A 300-amino-acid polypeptide reads, in one-letter code: MNIPSIYDDLMCQAISIERIKYWSTRDVVENPRKDEIRSQINTTGNEWIQNGINILDPLYNSVVKIFRKNHGSLTDRLISIVKSSVQLCKFRGVVDSIDSIEFCESVESINCISFQKYLEINKKLRIILVDILFSNAVMTTEGIENLFNEIDKLIKHLSDIKNRYKFQICGCDCDQQISKKRNFSEINYITPSCVEPKIIVQPPNIEFPINIPAKKPRLSQVQTIEQLPLRQSTSRQSISRQSISRQSTSRQSTAPEIIYVVREPDSIYTDFAYNKRQFGLRSYNPQEDSQILSQMVVIR.

The segment at Leu230–Arg251 is disordered. The segment covering Arg231 to Arg251 has biased composition (low complexity).

This is an uncharacterized protein from Acanthamoeba polyphaga (Amoeba).